A 263-amino-acid chain; its full sequence is Shikimate dehydrogenase (NADP(+)) (263 aa).

Shikimate contacts are provided by residues 16–18 and T65; that span reads SKS. Catalysis depends on K69, which acts as the Proton acceptor. N90 and D105 together coordinate shikimate. Residues 125–129 and L208 each bind NADP(+); that span reads GSGGS. Y210 serves as a coordination point for shikimate. Position 230 (G230) interacts with NADP(+).

Belongs to the shikimate dehydrogenase family. In terms of assembly, homodimer.

The catalysed reaction is shikimate + NADP(+) = 3-dehydroshikimate + NADPH + H(+). It functions in the pathway metabolic intermediate biosynthesis; chorismate biosynthesis; chorismate from D-erythrose 4-phosphate and phosphoenolpyruvate: step 4/7. Functionally, involved in the biosynthesis of the chorismate, which leads to the biosynthesis of aromatic amino acids. Catalyzes the reversible NADPH linked reduction of 3-dehydroshikimate (DHSA) to yield shikimate (SA). The polypeptide is Shikimate dehydrogenase (NADP(+)) (Helicobacter pylori (strain P12)).